Consider the following 324-residue polypeptide: Malate dehydrogenase (324 aa).

NAD(+) is bound by residues 10 to 15 (GAGAVG) and Asp34. 2 residues coordinate substrate: Arg88 and Arg94. Residues Asn101 and 124–126 (VTN) each bind NAD(+). 2 residues coordinate substrate: Asn126 and Arg157. His181 serves as the catalytic Proton acceptor.

This sequence belongs to the LDH/MDH superfamily.

It carries out the reaction (S)-malate + NAD(+) = oxaloacetate + NADH + H(+). Its function is as follows. Catalyzes the reversible oxidation of malate to oxaloacetate. The chain is Malate dehydrogenase (mdh) from Picrophilus torridus (strain ATCC 700027 / DSM 9790 / JCM 10055 / NBRC 100828 / KAW 2/3).